We begin with the raw amino-acid sequence, 367 residues long: 2-aminoethylphosphonate--pyruvate transaminase (367 aa).

Residue K194 is modified to N6-(pyridoxal phosphate)lysine.

Belongs to the class-V pyridoxal-phosphate-dependent aminotransferase family. PhnW subfamily. In terms of assembly, homodimer. Pyridoxal 5'-phosphate is required as a cofactor.

The enzyme catalyses (2-aminoethyl)phosphonate + pyruvate = phosphonoacetaldehyde + L-alanine. Its function is as follows. Involved in phosphonate degradation. The chain is 2-aminoethylphosphonate--pyruvate transaminase from Salmonella gallinarum (strain 287/91 / NCTC 13346).